Reading from the N-terminus, the 189-residue chain is uncharacterized protein (189 aa).

The span at 105 to 115 (EKLEKEEESKT) shows a compositional bias: basic and acidic residues. The disordered stretch occupies residues 105-189 (EKLEKEEESK…TDDEKTEVST (85 aa)). The span at 116–136 (AKKRAKRLRQKAAAKKRKLTK) shows a compositional bias: basic residues. Positions 141-151 (SDESSSDDSDS) are enriched in acidic residues. The span at 161-177 (SEGKQNTEVEDKDKVEK) shows a compositional bias: basic and acidic residues. Positions 178–189 (EETDDEKTEVST) are enriched in acidic residues.

This is an uncharacterized protein from Caenorhabditis elegans.